Consider the following 224-residue polypeptide: PKHD-type hydroxylase tll1907 (224 aa).

Residues 77-176 (KIIGPLLFSR…RLVAVAWVQS (100 aa)) form the Fe2OG dioxygenase domain. The Fe cation site is built by His96, Asp98, and His157. Arg167 provides a ligand contact to 2-oxoglutarate.

Fe(2+) serves as cofactor. Requires L-ascorbate as cofactor.

The protein is PKHD-type hydroxylase tll1907 of Thermosynechococcus vestitus (strain NIES-2133 / IAM M-273 / BP-1).